Here is a 253-residue protein sequence, read N- to C-terminus: tRNA pseudouridine synthase A (253 aa).

Aspartate 51 (nucleophile) is an active-site residue. Tyrosine 110 contacts substrate.

Belongs to the tRNA pseudouridine synthase TruA family. As to quaternary structure, homodimer.

It carries out the reaction uridine(38/39/40) in tRNA = pseudouridine(38/39/40) in tRNA. Its function is as follows. Formation of pseudouridine at positions 38, 39 and 40 in the anticodon stem and loop of transfer RNAs. The polypeptide is tRNA pseudouridine synthase A (Wolinella succinogenes (strain ATCC 29543 / DSM 1740 / CCUG 13145 / JCM 31913 / LMG 7466 / NCTC 11488 / FDC 602W) (Vibrio succinogenes)).